The sequence spans 494 residues: MKNIAFDSNKYLSLQRNHILERIKQFDGKLYMEFGGKMLEDFHAARVLPGYEPDNKIKLLKELKDQVEIVITINANNIEHSKTRGDLGISYDQEVLRLIDTFNALDIYVGSVVITQYNHQAAADHFQKQLAKNGITSYRHYPIKGYPTDINHIISPEGMGRNDYIKTSRNLIVVTAPGPGSGKLATCISQLYHDQLNGITSGYAKFETFPVWNLPLHHPVNLAYEAATADLDDVNMIDPFHLEAYGKTAVNYNRDIEVFPVLNRTFERILSQSPYASPTDMGVNMVGFSIVNEEAAIEASKQEIIRRYYQTLVDFKAERVTETAVKKLELLMNDIGVTPKDRQVTLIARQKAELTGQPALALQLPNGQVVTGKTSDLFGPTAAVIINAIKTLAHISKETHLIEPEYVKPIQGLKINHLGSHNPRLHANEILMALAITAMNNNQADLAMKELGNLKGSEAHSTVILTNEDKHALRQLGINVTFDPVYQHHKLYRS.

This sequence belongs to the UPF0371 family.

The chain is UPF0371 protein Sez_1293 from Streptococcus equi subsp. zooepidemicus (strain MGCS10565).